Consider the following 159-residue polypeptide: MQKHLINNNIKIRILDSNIKKNSSFFLPQYATPGSSGLDLRASIKKKISLPSKEVILVPTGIAIHIDNPYITALVLPRSGLGHKNGIILGNLIGLIDSDYQGELMISLWNRSKNIFFINPYDRIAQMIFVPIIRPTFSIVDDFEETVRFGKGFGHSGVQ.

Residues 78–80, asparagine 91, 95–97, and methionine 105 each bind substrate; these read RSG and LID.

Belongs to the dUTPase family. Requires Mg(2+) as cofactor.

The catalysed reaction is dUTP + H2O = dUMP + diphosphate + H(+). Its pathway is pyrimidine metabolism; dUMP biosynthesis; dUMP from dCTP (dUTP route): step 2/2. Functionally, this enzyme is involved in nucleotide metabolism: it produces dUMP, the immediate precursor of thymidine nucleotides and it decreases the intracellular concentration of dUTP so that uracil cannot be incorporated into DNA. In Buchnera aphidicola subsp. Schizaphis graminum (strain Sg), this protein is Deoxyuridine 5'-triphosphate nucleotidohydrolase.